Here is a 229-residue protein sequence, read N- to C-terminus: UPF0441 protein YE3666 (229 aa).

Disordered stretches follow at residues 101-125 (PAQAGMVPTSSSSSETTAAAPQQSG) and 190-229 (KPAVTNTITRGGFGESVAKQSSMQRSAATSSKTSTRSMGG). Composition is skewed to low complexity over residues 109–120 (TSSSSSETTAAA) and 214–229 (RSAATSSKTSTRSMGG).

The protein belongs to the UPF0441 family.

This is UPF0441 protein YE3666 from Yersinia enterocolitica serotype O:8 / biotype 1B (strain NCTC 13174 / 8081).